The primary structure comprises 334 residues: S-adenosylmethionine decarboxylase proenzyme 1 (334 aa).

Phe7 contacts substrate. Catalysis depends on residues Glu8 and Glu11. Residue Glu67 participates in substrate binding. Catalysis depends on Ser68, which acts as the Schiff-base intermediate with substrate; via pyruvic acid. A Pyruvic acid (Ser); by autocatalysis modification is found at Ser68. Residue Cys82 is the Proton donor; for catalytic activity of the active site. Phe223 is a substrate binding site. Active-site proton acceptor; for processing activity residues include Ser229 and His243. Glu247 is a substrate binding site. Ser298 carries the post-translational modification Phosphoserine.

This sequence belongs to the eukaryotic AdoMetDC family. In terms of assembly, heterotetramer of two alpha and two beta chains. Pyruvate serves as cofactor. Is synthesized initially as an inactive proenzyme. Formation of the active enzyme involves a self-maturation process in which the active site pyruvoyl group is generated from an internal serine residue via an autocatalytic post-translational modification. Two non-identical subunits are generated from the proenzyme in this reaction, and the pyruvate is formed at the N-terminus of the alpha chain, which is derived from the carboxyl end of the proenzyme. The post-translation cleavage follows an unusual pathway, termed non-hydrolytic serinolysis, in which the side chain hydroxyl group of the serine supplies its oxygen atom to form the C-terminus of the beta chain, while the remainder of the serine residue undergoes an oxidative deamination to produce ammonia and the pyruvoyl group blocking the N-terminus of the alpha chain. In terms of tissue distribution, expressed in embryonic stem cells; subsequently down-regulated in differentiating neural precursor cells.

The catalysed reaction is S-adenosyl-L-methionine + H(+) = S-adenosyl 3-(methylsulfanyl)propylamine + CO2. The protein operates within amine and polyamine biosynthesis; S-adenosylmethioninamine biosynthesis; S-adenosylmethioninamine from S-adenosyl-L-methionine: step 1/1. Its function is as follows. Essential for biosynthesis of the polyamines spermidine and spermine. Promotes maintenance and self-renewal of embryonic stem cells, by maintaining spermine levels. This is S-adenosylmethionine decarboxylase proenzyme 1 (Amd1) from Mus musculus (Mouse).